We begin with the raw amino-acid sequence, 243 residues long: Zinc import ATP-binding protein ZnuC (243 aa).

Positions leucine 8 to histidine 225 constitute an ABC transporter domain. Glycine 40–serine 47 provides a ligand contact to ATP.

Belongs to the ABC transporter superfamily. Zinc importer (TC 3.A.1.15.5) family. As to quaternary structure, the complex is composed of two ATP-binding proteins (ZnuC), two transmembrane proteins (ZnuB) and a solute-binding protein (ZnuA).

It localises to the cell inner membrane. The enzyme catalyses Zn(2+)(out) + ATP(in) + H2O(in) = Zn(2+)(in) + ADP(in) + phosphate(in) + H(+)(in). In terms of biological role, part of the ABC transporter complex ZnuABC involved in zinc import. Responsible for energy coupling to the transport system. In Psychrobacter arcticus (strain DSM 17307 / VKM B-2377 / 273-4), this protein is Zinc import ATP-binding protein ZnuC.